Reading from the N-terminus, the 85-residue chain is Small ribosomal subunit protein bS18 (85 aa).

This sequence belongs to the bacterial ribosomal protein bS18 family. As to quaternary structure, part of the 30S ribosomal subunit. Forms a tight heterodimer with protein bS6.

Binds as a heterodimer with protein bS6 to the central domain of the 16S rRNA, where it helps stabilize the platform of the 30S subunit. This Solidesulfovibrio magneticus (strain ATCC 700980 / DSM 13731 / RS-1) (Desulfovibrio magneticus) protein is Small ribosomal subunit protein bS18.